A 100-amino-acid polypeptide reads, in one-letter code: Large ribosomal subunit protein uL23 (100 aa).

This sequence belongs to the universal ribosomal protein uL23 family. As to quaternary structure, part of the 50S ribosomal subunit. Contacts protein L29, and trigger factor when it is bound to the ribosome.

Functionally, one of the early assembly proteins it binds 23S rRNA. One of the proteins that surrounds the polypeptide exit tunnel on the outside of the ribosome. Forms the main docking site for trigger factor binding to the ribosome. The chain is Large ribosomal subunit protein uL23 from Synechococcus sp. (strain RCC307).